Consider the following 87-residue polypeptide: MVNMKASMFLTFAGLVLLFVVCYASESEEKEFPKEMLSSIFAVDDDFKQEERDCAGYMRECKEKLCCSGYVCSSRWKWCVLPAPWRR.

An N-terminal signal peptide occupies residues 1–24 (MVNMKASMFLTFAGLVLLFVVCYA). Residues 25–52 (SESEEKEFPKEMLSSIFAVDDDFKQEER) constitute a propeptide that is removed on maturation. 3 disulfides stabilise this stretch: Cys54-Cys67, Cys61-Cys72, and Cys66-Cys79.

The protein belongs to the neurotoxin 10 (Hwtx-1) family. 51 (Hntx-8) subfamily. Hntx-8 sub-subfamily. Expressed by the venom gland.

The protein resides in the secreted. Its function is as follows. Ion channel inhibitor. This chain is U3-theraphotoxin-Hhn1a 2, found in Cyriopagopus hainanus (Chinese bird spider).